The chain runs to 477 residues: Cytochrome P450 monooxygenase poxC (477 aa).

A helical membrane pass occupies residues 24–41; the sequence is AWHFAVLSFVYVIARSIY. Residue Cys-420 participates in heme binding.

This sequence belongs to the cytochrome P450 family. Requires heme as cofactor.

It is found in the membrane. Its pathway is secondary metabolite biosynthesis. Its function is as follows. Cytochrome P450 monooxygenase; part of the gene cluster that mediates the biosynthesis of oxaleimides, cytotoxic compounds containing an unusual disubstituted succinimide moiety. The first step of the pathway is provided by the HR-PKS poxF that serves in a new mode of collaborative biosynthesis with the PKS-NRPS poxE, by providing the olefin containing amino acid substrate via the synthesis of an ACP-bound dec-4-enoate. The cytochrome P450 monooxygenase poxM-catalyzed oxidation at the alpha-position creates the enzyme-bound 2-hydroxydec-4-enoyl-ACP thioester, which may be prone to spontaneous hydrolysis to yield 2-hydroxydec-4-enoic acid due to increased electrophilicity of the carbonyl. 2-hydroxydec-4-enoic acid can then be further oxidized by poxM to yield the alpha-ketoacid 2-oxodec-4-enoicacid, which is reductively aminated by the aminotransferase poxL to yield (S,E)-2-aminodec-4-enoic acid. The Hybrid PKS-NRPS synthetase poxE then performs condensation between the octaketide product of its PKS modules and the amino group of (S,E)-2-aminodec-4-enoic acid which is activated and incorporated by the adenylation domain. The resulting aminoacyl product can be cyclized by the Diels-Alderase PoxQ and reductively released by the reductive (R) domain of poxE to yield an aldehyde intermediate. The released aldehyde is then substrate for a Knoevenagel condensation by the hydrolyase poxO followed by an oxidation at the 5-position of the pyrrolidone ring. The presence of the olefin from the amino acid building block allows for migration of the substituted allyl group to occur. This allylic transposition reaction takes place in a conjugate addition, semipinacol-like fashion to yield a succinimide intermediate. Iterative two-electron oxidations of the C7 methyl of the succinimide intermediate to the carboxylic acid can be catalyzed by one of two remaining cytochrome P450 monooxygenasess poxC or poxD to yield oxaleimide A. Subsequent oxidation yields the maleimide scaffold oxaleimide I. Both oxaleimide A and oxaleimide I can undergo oxidative modifications in the decalin ring to yield the series of products oxaleimides B to H. This chain is Cytochrome P450 monooxygenase poxC, found in Penicillium oxalicum (strain 114-2 / CGMCC 5302) (Penicillium decumbens).